The sequence spans 1481 residues: Cystic fibrosis transmembrane conductance regulator (1481 aa).

The Cytoplasmic segment spans residues 1 to 77 (MQRSPLEKAS…KLINALRRCF (77 aa)). A helical transmembrane segment spans residues 78–98 (FWRFTFYGILLYLGEVTKAVQ). Residues 81 to 365 (FTFYGILLYL…WAVQTWYDSL (285 aa)) enclose the ABC transmembrane type-1 1 domain. Topologically, residues 99–122 (PLLLGRIIASYDPDNKTERSIAIY) are extracellular. Residues 123 to 146 (LGIGLCLLFIVRTLLLHPAIFGLH) traverse the membrane as a helical segment. Topologically, residues 147 to 195 (HIGMQMRIAMFSLIYKKTLKLSSRVLDKISIGQLVSLLSNNLNKFDEGL) are cytoplasmic. Residues 196-216 (ALAHFVWIAPLQVALLMGLIW) traverse the membrane as a helical segment. The Extracellular portion of the chain corresponds to 217 to 222 (ELLQAS). Residues 223 to 243 (AFCGLGFLIVLALFQAGLGRM) form a helical membrane-spanning segment. The Cytoplasmic portion of the chain corresponds to 244–298 (MMKYRDQRAGKINERLVITSEMIENIQSVKAYCWEEAMEKIIENLRQTELKLTRK). Residues 299-319 (AAYVRYFNSSAFFFSGFFVVF) traverse the membrane as a helical segment. Residues 320 to 339 (LSVLPYALIKGIVLRKIFTT) lie on the Extracellular side of the membrane. Residues 340–358 (ISFCIVLRMAVTRQFPWAV) traverse the membrane as a helical segment. The Cytoplasmic segment spans residues 359 to 858 (QTWYDSLGAI…YLRYITLHKS (500 aa)). ATP-binding positions include Trp-401, Ser-434, 458–465 (GSTGAGKT), and Gln-493. In terms of domain architecture, ABC transporter 1 spans 423-646 (NGDDNLFFSN…RPDFSSKLMG (224 aa)). The S-palmitoyl cysteine moiety is linked to residue Cys-524. Ser-549 and Ser-660 each carry phosphoserine. The segment at 654–831 (SSERRNSILT…EEINEEDLKE (178 aa)) is disordered R region. Ser-670 carries the post-translational modification Phosphoserine; by PKA. The residue at position 686 (Ser-686) is a Phosphoserine. A Glycyl lysine isopeptide (Lys-Gly) (interchain with G-Cter in ubiquitin) cross-link involves residue Lys-688. Phosphoserine occurs at positions 700 and 712. At Thr-717 the chain carries Phosphothreonine. Phosphoserine occurs at positions 737, 753, 768, 790, 795, and 813. The chain crosses the membrane as a helical span at residues 859-879 (LIFVLIWCLVIFLAEVAASLV). Residues 859 to 1155 (LIFVLIWCLV…AVNSSIDVDS (297 aa)) enclose the ABC transmembrane type-1 2 domain. Over 880 to 918 (VLWLLGNTPFQDKGNSTYSRNNSYAVIITNTSSYYVFYI) the chain is Extracellular. Residues Asn-894, Asn-900, and Asn-909 are each glycosylated (N-linked (GlcNAc...) asparagine). A discontinuously helical transmembrane segment spans residues 919 to 939 (YVGVADTLLALGFFRGLPLVH). The Cytoplasmic portion of the chain corresponds to 940 to 990 (TLITVSKMLHHKMLHSVLQAPMSTLNTLKAGGILNRFSKDIAILDDLLPLT). The chain crosses the membrane as a helical span at residues 991-1011 (IFDFIQLLLIVIGAIAVVSVL). Over 1012–1013 (QP) the chain is Extracellular. A helical membrane pass occupies residues 1014–1034 (YIFLATVPVIAAFILLRAYFL). Over 1035–1095 (QTSQQLKQLE…TANWFLYLST (61 aa)) the chain is Cytoplasmic. Residues 1096–1116 (LRWFQMRIEMIFVIFFIAVTF) form a helical membrane-spanning segment. At 1117 to 1130 (ISILTTGEGEGTVG) the chain is on the extracellular side. Residues 1131-1151 (IILTLAMNIMSTLQWAVNSSI) form a helical membrane-spanning segment. The Cytoplasmic portion of the chain corresponds to 1152-1481 (DVDSLMRSVS…TEEEVQETRL (330 aa)). The ABC transporter 2 domain occupies 1211-1444 (MTIKDLTAKY…KSLFRQAISH (234 aa)). Residues Tyr-1220 and 1245–1252 (GRTGSGKS) each bind ATP. Residues 1387-1481 (RALKQAFADC…TEEEVQETRL (95 aa)) are interaction with GORASP2. Residue Cys-1396 is the site of S-palmitoyl cysteine attachment. Phosphoserine occurs at positions 1445 and 1457. The disordered stretch occupies residues 1453 to 1481 (HRNSSKYKSQPQIASLKEETEEEVQETRL). Acidic residues predominate over residues 1471–1481 (ETEEEVQETRL). Positions 1479–1481 (TRL) match the PDZ-binding motif.

This sequence belongs to the ABC transporter superfamily. ABCC family. CFTR transporter (TC 3.A.1.202) subfamily. In terms of assembly, monomer; does not require oligomerization for channel activity. May form oligomers in the membrane. Interacts with SLC26A3, SLC26A6 and NHERF1. Interacts with SHANK2. Interacts with MYO6. Interacts (via C-terminus) with GOPC (via PDZ domain); this promotes CFTR internalization and thereby decreases channel activity. Interacts with SLC4A7 through NHERF1. Found in a complex with MYO5B and RAB11A. Interacts with ANO1. Interacts with SLC26A8. Interacts with AHCYL1; the interaction increases CFTR activity. Interacts with CSE1L. The core-glycosylated form interacts with GORASP2 (via PDZ GRASP-type 1 domain) in respone to ER stress. Interacts with MARCHF2; the interaction leads to CFTR ubiqtuitination and degradation. Interacts with ADGRG2. N-glycosylated. In terms of processing, phosphorylated; cAMP treatment promotes phosphorylation and activates the channel. Dephosphorylation decreases the ATPase activity (in vitro). Phosphorylation at PKA sites activates the channel. Phosphorylation at PKC sites enhances the response to phosphorylation by PKA. Phosphorylated by AMPK; this inhibits channel activity. Post-translationally, ubiquitinated, leading to its degradation in the lysosome. Deubiquitination by USP10 in early endosomes enhances its endocytic recycling to the cell membrane. Ubiquitinated by RNF185 during ER stress. Ubiquitinated by MARCHF2.

The protein localises to the apical cell membrane. It localises to the early endosome membrane. It is found in the cell membrane. The protein resides in the recycling endosome membrane. Its subcellular location is the endoplasmic reticulum membrane. The protein localises to the nucleus. It carries out the reaction ATP + H2O + closed Cl(-) channel = ADP + phosphate + open Cl(-) channel.. The enzyme catalyses chloride(in) = chloride(out). The catalysed reaction is hydrogencarbonate(in) = hydrogencarbonate(out). It catalyses the reaction ATP + H2O = ADP + phosphate + H(+). Its function is as follows. Epithelial ion channel that plays an important role in the regulation of epithelial ion and water transport and fluid homeostasis. Mediates the transport of chloride ions across the cell membrane. Possesses an intrinsic ATPase activity and utilizes ATP to gate its channel; the passive flow of anions through the channel is gated by cycles of ATP binding and hydrolysis by the ATP-binding domains. The ion channel is also permeable to HCO(3)(-); selectivity depends on the extracellular chloride concentration. Exerts its function also by modulating the activity of other ion channels and transporters. Contributes to the regulation of the pH and the ion content of the epithelial fluid layer. Modulates the activity of the epithelial sodium channel (ENaC) complex, in part by regulating the cell surface expression of the ENaC complex. May regulate bicarbonate secretion and salvage in epithelial cells by regulating the transporter SLC4A7. Can inhibit the chloride channel activity of ANO1. Plays a role in the chloride and bicarbonate homeostasis during sperm epididymal maturation and capacitation. The polypeptide is Cystic fibrosis transmembrane conductance regulator (Aotus nancymaae (Ma's night monkey)).